Here is a 90-residue protein sequence, read N- to C-terminus: MAHKKAGGSTRNGRDSNPKMLGVKRFGGERVLAGNIIVRQRGTHYRPGENMGMGRDHTLYALIEGKVKFTRKGPKKRNFVSIEPLEESQP.

Residues 1–22 are disordered; the sequence is MAHKKAGGSTRNGRDSNPKMLG.

Belongs to the bacterial ribosomal protein bL27 family.

This chain is Large ribosomal subunit protein bL27, found in Coxiella burnetii (strain CbuK_Q154) (Coxiella burnetii (strain Q154)).